The primary structure comprises 107 residues: Flagellar hook-basal body complex protein FliE (107 aa).

It belongs to the FliE family.

It localises to the bacterial flagellum basal body. The protein is Flagellar hook-basal body complex protein FliE of Cupriavidus pinatubonensis (strain JMP 134 / LMG 1197) (Cupriavidus necator (strain JMP 134)).